The primary structure comprises 583 residues: Torsin-1A-interacting protein 1 (583 aa).

Over residues Met1–Arg12 the composition is skewed to basic and acidic residues. Disordered stretches follow at residues Met1 to Ser254 and Ala271 to Gln293. Residues Met1 to Trp338 are Nuclear-facing. Ser60 carries the phosphoserine modification. Basic and acidic residues-rich tracts occupy residues Val74–Glu101 and Arg115–Thr124. Residues Ser135 and Ser143 each carry the phosphoserine modification. Position 146 is a methionine sulfoxide (Met146). Residues Ser154, Ser156, and Ser157 each carry the phosphoserine modification. Polar residues predominate over residues Gln165 to Lys174. Phosphoserine occurs at positions 186 and 215. A compositionally biased stretch (acidic residues) spans Glu216–Gln225. Thr220 is modified (phosphothreonine). Residues Ser227, Ser230, and Ser242 each carry the phosphoserine modification. Basic and acidic residues predominate over residues Arg238–Thr250. The segment covering Ser277 to Pro287 has biased composition (polar residues). Methionine sulfoxide is present on Met301. Ser305 carries the post-translational modification Phosphoserine. Lys308 is covalently cross-linked (Glycyl lysine isopeptide (Lys-Gly) (interchain with G-Cter in SUMO2)). Residues Ser309 and Ser315 each carry the phosphoserine modification. The segment at Ser309–Gln328 is disordered. Residues Trp339 to Phe355 traverse the membrane as a helical segment. Topologically, residues Ser356–Leu583 are perinuclear space. The segment at Ser356–Leu583 is interaction with TOR1A. A coiled-coil region spans residues Glu359–Ser435. An N-linked (GlcNAc...) asparagine glycan is attached at Asn399. At Met552 the chain carries Methionine sulfoxide.

It belongs to the TOR1AIP family. Interacts with ATP1B4. Interacts with TOR1A (ATP-bound). Interacts with TOR1B, TOR2A and TOR3A. Interacts with VIM. Phosphorylated. Dephosphorylated at Ser-309 and Ser-315 by serine/threonine-protein phosphatase PP1. As to expression, expressed in muscle, liver and kidney. In terms of tissue distribution, major isoform present in liver, brain and heart (at protein level). Expressed at lower levels than isoform 4 in lung, kidney and spleen (at protein level). Similar levels of isoforms 1 and 4 are observed in ovary, testis and pancreas (at protein level). Expressed at higher levels than isoform 1 in lung, kidney and spleen (at protein level). Expressed at lower levels than isoform 1 in liver, brain and heart (at protein level). Similar levels of isoforms 1 and 4 are observed in ovary, testis and pancreas (at protein level).

The protein localises to the nucleus inner membrane. The protein resides in the nucleus envelope. Its subcellular location is the nucleus. In terms of biological role, required for nuclear membrane integrity. Induces TOR1A and TOR1B ATPase activity and is required for their location on the nuclear membrane. Binds to A- and B-type lamins. Possible role in membrane attachment and assembly of the nuclear lamina. The sequence is that of Torsin-1A-interacting protein 1 (TOR1AIP1) from Homo sapiens (Human).